A 218-amino-acid polypeptide reads, in one-letter code: Phosphatidylserine decarboxylase proenzyme (218 aa).

Residue Ser188 is the Schiff-base intermediate with substrate; via pyruvic acid of the active site. Position 188 is a pyruvic acid (Ser); by autocatalysis (Ser188).

Belongs to the phosphatidylserine decarboxylase family. PSD-A subfamily. Heterodimer of a large membrane-associated beta subunit and a small pyruvoyl-containing alpha subunit. Pyruvate serves as cofactor. Is synthesized initially as an inactive proenzyme. Formation of the active enzyme involves a self-maturation process in which the active site pyruvoyl group is generated from an internal serine residue via an autocatalytic post-translational modification. Two non-identical subunits are generated from the proenzyme in this reaction, and the pyruvate is formed at the N-terminus of the alpha chain, which is derived from the carboxyl end of the proenzyme. The post-translation cleavage follows an unusual pathway, termed non-hydrolytic serinolysis, in which the side chain hydroxyl group of the serine supplies its oxygen atom to form the C-terminus of the beta chain, while the remainder of the serine residue undergoes an oxidative deamination to produce ammonia and the pyruvoyl prosthetic group on the alpha chain.

It localises to the cell membrane. The catalysed reaction is a 1,2-diacyl-sn-glycero-3-phospho-L-serine + H(+) = a 1,2-diacyl-sn-glycero-3-phosphoethanolamine + CO2. Its pathway is phospholipid metabolism; phosphatidylethanolamine biosynthesis; phosphatidylethanolamine from CDP-diacylglycerol: step 2/2. Functionally, catalyzes the formation of phosphatidylethanolamine (PtdEtn) from phosphatidylserine (PtdSer). This chain is Phosphatidylserine decarboxylase proenzyme, found in Streptomyces coelicolor (strain ATCC BAA-471 / A3(2) / M145).